Consider the following 253-residue polypeptide: Probable transcriptional regulatory protein SynRCC307_1833 (253 aa).

Belongs to the TACO1 family.

The protein localises to the cytoplasm. This is Probable transcriptional regulatory protein SynRCC307_1833 from Synechococcus sp. (strain RCC307).